The primary structure comprises 140 residues: Large ribosomal subunit protein bL17 (140 aa).

Belongs to the bacterial ribosomal protein bL17 family. Part of the 50S ribosomal subunit. Contacts protein L32.

This is Large ribosomal subunit protein bL17 from Ruegeria pomeroyi (strain ATCC 700808 / DSM 15171 / DSS-3) (Silicibacter pomeroyi).